A 470-amino-acid polypeptide reads, in one-letter code: Argininosuccinate lyase (470 aa).

The protein belongs to the lyase 1 family. Argininosuccinate lyase subfamily.

Its subcellular location is the cytoplasm. It carries out the reaction 2-(N(omega)-L-arginino)succinate = fumarate + L-arginine. It participates in amino-acid biosynthesis; L-arginine biosynthesis; L-arginine from L-ornithine and carbamoyl phosphate: step 3/3. This chain is Argininosuccinate lyase, found in Leptospira interrogans serogroup Icterohaemorrhagiae serovar copenhageni (strain Fiocruz L1-130).